The primary structure comprises 156 residues: Cyanate hydratase (156 aa).

Catalysis depends on residues Arg-96, Glu-99, and Ser-122.

Belongs to the cyanase family. As to quaternary structure, homodecamer composed of five homodimers.

It catalyses the reaction cyanate + hydrogencarbonate + 3 H(+) = NH4(+) + 2 CO2. Catalyzes the reaction of cyanate with bicarbonate to produce ammonia and carbon dioxide. The polypeptide is Cyanate hydratase (cynS) (Escherichia coli O157:H7).